Reading from the N-terminus, the 102-residue chain is MVYAVVRAGGRQEKVEVGTIVTMDRVKNQQSGKVVLPAVLLVDGDTITTDAAKLADVTVSAEILNDLRGPKIVIQKFKNKTGYKKRQGHRQDLTRVQVTEIN.

The protein belongs to the bacterial ribosomal protein bL21 family. Part of the 50S ribosomal subunit. Contacts protein L20.

Functionally, this protein binds to 23S rRNA in the presence of protein L20. This chain is Large ribosomal subunit protein bL21, found in Clavibacter sepedonicus (Clavibacter michiganensis subsp. sepedonicus).